Reading from the N-terminus, the 443-residue chain is Histidinol dehydrogenase (443 aa).

The NAD(+) site is built by tyrosine 133, glutamine 191, and asparagine 214. Serine 240, glutamine 262, and histidine 265 together coordinate substrate. Positions 262 and 265 each coordinate Zn(2+). Residues glutamate 329 and histidine 330 each act as proton acceptor in the active site. Histidine 330, aspartate 363, glutamate 417, and histidine 422 together coordinate substrate. Position 363 (aspartate 363) interacts with Zn(2+). Histidine 422 is a Zn(2+) binding site.

The protein belongs to the histidinol dehydrogenase family. As to quaternary structure, homodimer. Zn(2+) serves as cofactor.

It catalyses the reaction L-histidinol + 2 NAD(+) + H2O = L-histidine + 2 NADH + 3 H(+). It functions in the pathway amino-acid biosynthesis; L-histidine biosynthesis; L-histidine from 5-phospho-alpha-D-ribose 1-diphosphate: step 9/9. Functionally, catalyzes the sequential NAD-dependent oxidations of L-histidinol to L-histidinaldehyde and then to L-histidine. This chain is Histidinol dehydrogenase, found in Blochmanniella pennsylvanica (strain BPEN).